Consider the following 89-residue polypeptide: Small ribosomal subunit protein uS15 (89 aa).

The protein belongs to the universal ribosomal protein uS15 family. As to quaternary structure, part of the 30S ribosomal subunit. Forms a bridge to the 50S subunit in the 70S ribosome, contacting the 23S rRNA.

Functionally, one of the primary rRNA binding proteins, it binds directly to 16S rRNA where it helps nucleate assembly of the platform of the 30S subunit by binding and bridging several RNA helices of the 16S rRNA. In terms of biological role, forms an intersubunit bridge (bridge B4) with the 23S rRNA of the 50S subunit in the ribosome. This Nostoc sp. (strain PCC 7120 / SAG 25.82 / UTEX 2576) protein is Small ribosomal subunit protein uS15.